Reading from the N-terminus, the 158-residue chain is GTP-dependent dephospho-CoA kinase (158 aa).

GTP is bound by residues Asp-35, Val-36, Asp-54, Lys-56, Glu-109, and Asp-132.

It belongs to the GTP-dependent DPCK family.

It carries out the reaction 3'-dephospho-CoA + GTP = GDP + CoA + H(+). It functions in the pathway cofactor biosynthesis; coenzyme A biosynthesis. Functionally, catalyzes the GTP-dependent phosphorylation of the 3'-hydroxyl group of dephosphocoenzyme A to form coenzyme A (CoA). The chain is GTP-dependent dephospho-CoA kinase from Methanococcus maripaludis (strain DSM 14266 / JCM 13030 / NBRC 101832 / S2 / LL).